The following is a 226-amino-acid chain: Low-molecular weight cobalt-containing nitrile hydratase subunit beta (226 aa).

The tract at residues 1-22 is disordered; the sequence is MDGIHDLGGRAGLGPIKPESDE.

Belongs to the nitrile hydratase subunit beta family. As to quaternary structure, heterodimer of an alpha and a beta chain.

It carries out the reaction an aliphatic primary amide = an aliphatic nitrile + H2O. In terms of biological role, NHase catalyzes the hydration of various nitrile compounds to the corresponding amides. This Rhodococcus rhodochrous protein is Low-molecular weight cobalt-containing nitrile hydratase subunit beta.